A 251-amino-acid polypeptide reads, in one-letter code: MLAKRIIPCLDVKNGRVVKGVQFEELRDAGSILEQAKFYNDELADELVFLDISASIESRRTTLEEVLKVSEQVFIPLTVGGGINSVERAREAFLHGADKVSVNTSAVKEPTLISELAERFGSQAVVVAIDIKNVGSHYEVFTHSGKTPTGLDTLEWAHKVVELGAGEILLTSMDRDGTQKGYDNVILKEISTSVGVPVIASGGAGNLQHLYEGFSIGMADAALAASIFHFRQHSVREAKAFLQEKGIAIRL.

Active-site residues include aspartate 11 and aspartate 130.

The protein belongs to the HisA/HisF family. Heterodimer of HisH and HisF.

The protein resides in the cytoplasm. The catalysed reaction is 5-[(5-phospho-1-deoxy-D-ribulos-1-ylimino)methylamino]-1-(5-phospho-beta-D-ribosyl)imidazole-4-carboxamide + L-glutamine = D-erythro-1-(imidazol-4-yl)glycerol 3-phosphate + 5-amino-1-(5-phospho-beta-D-ribosyl)imidazole-4-carboxamide + L-glutamate + H(+). Its pathway is amino-acid biosynthesis; L-histidine biosynthesis; L-histidine from 5-phospho-alpha-D-ribose 1-diphosphate: step 5/9. Its function is as follows. IGPS catalyzes the conversion of PRFAR and glutamine to IGP, AICAR and glutamate. The HisF subunit catalyzes the cyclization activity that produces IGP and AICAR from PRFAR using the ammonia provided by the HisH subunit. This is Imidazole glycerol phosphate synthase subunit HisF from Chloroherpeton thalassium (strain ATCC 35110 / GB-78).